The following is a 304-amino-acid chain: Non-specific ribonucleoside hydrolase RihC (304 aa).

Residue H233 is part of the active site.

Belongs to the IUNH family. RihC subfamily.

Hydrolyzes both purine and pyrimidine ribonucleosides with a broad-substrate specificity. This chain is Non-specific ribonucleoside hydrolase RihC, found in Escherichia coli O139:H28 (strain E24377A / ETEC).